A 430-amino-acid chain; its full sequence is Ribosomal protein uS12 methylthiotransferase RimO (430 aa).

Residues 1 to 116 (MRVGIKVLGC…IANAIENGTD (116 aa)) form the MTTase N-terminal domain. [4Fe-4S] cluster contacts are provided by cysteine 10, cysteine 46, cysteine 79, cysteine 148, cysteine 152, and cysteine 155. Residues 134–365 (LEERPYAYVK…LLQAEISNSR (232 aa)) form the Radical SAM core domain. One can recognise a TRAM domain in the interval 367 to 430 (DRFVGKKLKF…DEYDMWGSVI (64 aa)).

It belongs to the methylthiotransferase family. RimO subfamily. It depends on [4Fe-4S] cluster as a cofactor.

The protein localises to the cytoplasm. The catalysed reaction is L-aspartate(89)-[ribosomal protein uS12]-hydrogen + (sulfur carrier)-SH + AH2 + 2 S-adenosyl-L-methionine = 3-methylsulfanyl-L-aspartate(89)-[ribosomal protein uS12]-hydrogen + (sulfur carrier)-H + 5'-deoxyadenosine + L-methionine + A + S-adenosyl-L-homocysteine + 2 H(+). In terms of biological role, catalyzes the methylthiolation of an aspartic acid residue of ribosomal protein uS12. This is Ribosomal protein uS12 methylthiotransferase RimO from Thermotoga petrophila (strain ATCC BAA-488 / DSM 13995 / JCM 10881 / RKU-1).